The primary structure comprises 258 residues: UPF0246 protein YaaA (258 aa).

It belongs to the UPF0246 family.

The protein is UPF0246 protein YaaA of Escherichia coli (strain SMS-3-5 / SECEC).